An 856-amino-acid polypeptide reads, in one-letter code: Lon protease homolog 2, peroxisomal (856 aa).

Residues 13–222 (LPLLLTHEGV…VTIPLLLRQI (210 aa)) enclose the Lon N-terminal domain. 379–386 (GPPGVGKT) serves as a coordination point for ATP. A compositionally biased stretch (basic and acidic residues) spans 586-608 (GQHREHKSEHLEAPEGEERKESV). Positions 586–614 (GQHREHKSEHLEAPEGEERKESVPEGSKS) are disordered. The 187-residue stretch at 655 to 841 (LNQPGVAIGL…DEVLNAAFDG (187 aa)) folds into the Lon proteolytic domain. Residues serine 747 and lysine 790 contribute to the active site. The short motif at 854–856 (SKL) is the Microbody targeting signal element.

It belongs to the peptidase S16 family.

The protein localises to the peroxisome matrix. The catalysed reaction is Hydrolysis of proteins in presence of ATP.. ATP-dependent serine protease that mediates the selective degradation of misfolded and unassembled polypeptides in the peroxisomal matrix. Necessary for type 2 peroxisome targeting signal (PTS2)-containing protein processing and facilitates peroxisome matrix protein import. The chain is Lon protease homolog 2, peroxisomal (lonp2) from Xenopus laevis (African clawed frog).